The sequence spans 475 residues: E3 ubiquitin-protein ligase TRIM62 (475 aa).

An RING-type zinc finger spans residues 11 to 54 (CSICLSIYQDPVSLGCEHYFCRRCITEHWVRQEAQGARDCPECR). Residues 88–128 (RAARPCQAHDKVKLFCLTDRALLCFFCDEPALHEQHQVTGI) form a B box-type zinc finger. C93, H96, C114, and H120 together coordinate Zn(2+). Positions 121 to 241 (EQHQVTGIDD…LQERLAETDR (121 aa)) form a coiled coil. Positions 277 to 475 (PLQYTIWKSL…QPLRINTVRI (199 aa)) constitute a B30.2/SPRY domain.

This sequence belongs to the TRIM/RBCC family. Interacts with the ubiquitin-conjugating enzyme, UBE2D2. Polyubiquitinated, autoubiquitinated in the presence of UBE2D2.

It is found in the cytoplasm. The enzyme catalyses S-ubiquitinyl-[E2 ubiquitin-conjugating enzyme]-L-cysteine + [acceptor protein]-L-lysine = [E2 ubiquitin-conjugating enzyme]-L-cysteine + N(6)-ubiquitinyl-[acceptor protein]-L-lysine.. The protein operates within protein modification; protein ubiquitination. E3 ubiquitin ligase that plays a role in antifungal immunity by mediating 'Lys-27'-linked ubiquitination of CARD9 downstream of C-type lectin receptors; leading to CARD9 activation, followed by activation of NF-kappa-B and MAP kinase p38 pathways. E3 ubiquitin ligase activity is dependent on E2 ubiquitin-conjugating enzyme UBE2D2. This is E3 ubiquitin-protein ligase TRIM62 from Mus musculus (Mouse).